Consider the following 308-residue polypeptide: Methionyl-tRNA formyltransferase (308 aa).

109 to 112 (SLLP) serves as a coordination point for (6S)-5,6,7,8-tetrahydrofolate.

This sequence belongs to the Fmt family.

It carries out the reaction L-methionyl-tRNA(fMet) + (6R)-10-formyltetrahydrofolate = N-formyl-L-methionyl-tRNA(fMet) + (6S)-5,6,7,8-tetrahydrofolate + H(+). In terms of biological role, attaches a formyl group to the free amino group of methionyl-tRNA(fMet). The formyl group appears to play a dual role in the initiator identity of N-formylmethionyl-tRNA by promoting its recognition by IF2 and preventing the misappropriation of this tRNA by the elongation apparatus. This Caulobacter vibrioides (strain NA1000 / CB15N) (Caulobacter crescentus) protein is Methionyl-tRNA formyltransferase.